We begin with the raw amino-acid sequence, 353 residues long: Photosystem II D2 protein (353 aa).

T2 carries the post-translational modification N-acetylthreonine. T2 carries the phosphothreonine modification. Residues 41-61 form a helical membrane-spanning segment; sequence CAYFALGGWFTGTTFVTSWYT. Residue H118 coordinates chlorophyll a. A helical transmembrane segment spans residues 125-141; the sequence is GFMLRQFELARSVQLRP. 2 residues coordinate pheophytin a: Q130 and N143. The chain crosses the membrane as a helical span at residues 153–166; that stretch reads VFVSVFLIYPLGQS. H198 is a chlorophyll a binding site. The helical transmembrane segment at 208 to 228 threads the bilayer; sequence AALLCAIHGATVENTLFEDGD. A plastoquinone contacts are provided by H215 and F262. H215 serves as a coordination point for Fe cation. H269 contacts Fe cation. Residues 279-295 traverse the membrane as a helical segment; sequence GLWMSALGVVGLALNLR.

The protein belongs to the reaction center PufL/M/PsbA/D family. PSII is composed of 1 copy each of membrane proteins PsbA, PsbB, PsbC, PsbD, PsbE, PsbF, PsbH, PsbI, PsbJ, PsbK, PsbL, PsbM, PsbT, PsbX, PsbY, PsbZ, Psb30/Ycf12, at least 3 peripheral proteins of the oxygen-evolving complex and a large number of cofactors. It forms dimeric complexes. The D1/D2 heterodimer binds P680, chlorophylls that are the primary electron donor of PSII, and subsequent electron acceptors. It shares a non-heme iron and each subunit binds pheophytin, quinone, additional chlorophylls, carotenoids and lipids. There is also a Cl(-1) ion associated with D1 and D2, which is required for oxygen evolution. The PSII complex binds additional chlorophylls, carotenoids and specific lipids. is required as a cofactor.

The protein resides in the plastid. Its subcellular location is the chloroplast thylakoid membrane. The enzyme catalyses 2 a plastoquinone + 4 hnu + 2 H2O = 2 a plastoquinol + O2. Its function is as follows. Photosystem II (PSII) is a light-driven water:plastoquinone oxidoreductase that uses light energy to abstract electrons from H(2)O, generating O(2) and a proton gradient subsequently used for ATP formation. It consists of a core antenna complex that captures photons, and an electron transfer chain that converts photonic excitation into a charge separation. The D1/D2 (PsbA/PsbD) reaction center heterodimer binds P680, the primary electron donor of PSII as well as several subsequent electron acceptors. D2 is needed for assembly of a stable PSII complex. The chain is Photosystem II D2 protein from Ranunculus macranthus (Large buttercup).